The following is a 426-amino-acid chain: Enolase (426 aa).

Glutamine 165 is a (2R)-2-phosphoglycerate binding site. The active-site Proton donor is the glutamate 209. Mg(2+)-binding residues include aspartate 244, glutamate 287, and aspartate 313. The (2R)-2-phosphoglycerate site is built by lysine 338, arginine 367, serine 368, and lysine 389. Lysine 338 serves as the catalytic Proton acceptor.

Belongs to the enolase family. Requires Mg(2+) as cofactor.

It localises to the cytoplasm. Its subcellular location is the secreted. It is found in the cell surface. The catalysed reaction is (2R)-2-phosphoglycerate = phosphoenolpyruvate + H2O. Its pathway is carbohydrate degradation; glycolysis; pyruvate from D-glyceraldehyde 3-phosphate: step 4/5. Its function is as follows. Catalyzes the reversible conversion of 2-phosphoglycerate (2-PG) into phosphoenolpyruvate (PEP). It is essential for the degradation of carbohydrates via glycolysis. The polypeptide is Enolase (Methanococcus vannielii (strain ATCC 35089 / DSM 1224 / JCM 13029 / OCM 148 / SB)).